A 460-amino-acid chain; its full sequence is G2/mitotic-specific cyclin-4 (460 aa).

The protein belongs to the cyclin family. Cyclin AB subfamily.

In terms of biological role, essential for the control of the cell cycle at the G2/M (mitosis) transition. Interacts with the CDC2 protein kinase to form MPF. G2/M cyclins accumulate steadily during G2 and are abruptly destroyed at mitosis. In Saccharomyces cerevisiae (strain ATCC 204508 / S288c) (Baker's yeast), this protein is G2/mitotic-specific cyclin-4 (CLB4).